The sequence spans 26 residues: Superoxide dismutase [Cu-Zn] (26 aa).

Cys-7 carries S-palmitoyl cysteine lipidation.

Belongs to the Cu-Zn superoxide dismutase family. In terms of assembly, homotrimer. Cu cation serves as cofactor. Requires Zn(2+) as cofactor.

Its subcellular location is the cytoplasm. It is found in the nucleus. The enzyme catalyses 2 superoxide + 2 H(+) = H2O2 + O2. Its function is as follows. Destroys radicals which are normally produced within the cells and which are toxic to biological systems. The protein is Superoxide dismutase [Cu-Zn] (sod1) of Paralichthys olivaceus (Bastard halibut).